The primary structure comprises 326 residues: Glyoxylate/hydroxypyruvate reductase B (326 aa).

Active-site residues include Arg237 and Glu266. Residue His285 is the Proton donor of the active site.

This sequence belongs to the D-isomer specific 2-hydroxyacid dehydrogenase family. GhrB subfamily. As to quaternary structure, homodimer.

It localises to the cytoplasm. The enzyme catalyses glycolate + NADP(+) = glyoxylate + NADPH + H(+). It carries out the reaction (R)-glycerate + NAD(+) = 3-hydroxypyruvate + NADH + H(+). It catalyses the reaction (R)-glycerate + NADP(+) = 3-hydroxypyruvate + NADPH + H(+). Its function is as follows. Catalyzes the NADPH-dependent reduction of glyoxylate and hydroxypyruvate into glycolate and glycerate, respectively. This chain is Glyoxylate/hydroxypyruvate reductase B, found in Yersinia enterocolitica serotype O:8 / biotype 1B (strain NCTC 13174 / 8081).